We begin with the raw amino-acid sequence, 108 residues long: Nucleoid-associated protein BPP1222 (108 aa).

The disordered stretch occupies residues 86-108; the sequence is TSQEKMASVTAGMPLPPGMKLPF. The segment covering 99-108 has biased composition (pro residues); sequence PLPPGMKLPF.

Belongs to the YbaB/EbfC family. Homodimer.

It is found in the cytoplasm. Its subcellular location is the nucleoid. In terms of biological role, binds to DNA and alters its conformation. May be involved in regulation of gene expression, nucleoid organization and DNA protection. This is Nucleoid-associated protein BPP1222 from Bordetella parapertussis (strain 12822 / ATCC BAA-587 / NCTC 13253).